The chain runs to 388 residues: UTP--glucose-1-phosphate uridylyltransferase (388 aa).

Aspartate 118 is a Mg(2+) binding site.

This sequence belongs to the CugP-type UDP-glucose pyrophosphorylase family. Mg(2+) serves as cofactor.

The catalysed reaction is alpha-D-glucose 1-phosphate + UTP + H(+) = UDP-alpha-D-glucose + diphosphate. In terms of biological role, catalyzes the formation of UDP-glucose, from UTP and glucose 1-phosphate. Is highly specific since it cannot use other NTPs such as dTTP, CTP, ATP, and GTP, and other sugar-1P such as GlcNAc-1P, Gal-1P, and Man-1P, as substrates. Has probably a central and essential role as the substrate supplier for galactolipid synthesis; galactolipids are major constituents of the photosynthetic thylakoid membrane and important for photosynthetic activity. This is UTP--glucose-1-phosphate uridylyltransferase from Synechocystis sp. (strain ATCC 27184 / PCC 6803 / Kazusa).